Here is a 713-residue protein sequence, read N- to C-terminus: Forkhead box protein P2 (713 aa).

Residues 1-28 (MMQESATETISNSSMNQNGMSTLSSQLD) are compositionally biased toward polar residues. Disordered regions lie at residues 1–45 (MMQE…SEVS) and 279–337 (DNGI…TGAS). Over residues 290–303 (TTNNSSSTTSSTTS) the composition is skewed to low complexity. The segment covering 313–322 (SIVNGQSSVL) has biased composition (polar residues). Residues 324-335 (ARRDSSSHEETG) show a composition bias toward basic and acidic residues. The C2H2-type zinc finger occupies 344–369 (GVCKWPGCESICEDFGQFLKHLNNEH). Residues 386-407 (VQQLEIQLSKERERLQAMMTHL) are leucine-zipper. The segment at 420–424 (PLNLV) is CTBP1-binding. Positions 436–457 (TSPQSLPQTPTTPTAPVTPITQ) are enriched in low complexity. The disordered stretch occupies residues 436 to 463 (TSPQSLPQTPTTPTAPVTPITQGPSVIT). The segment at residues 502-592 (RPPFTYATLI…SQKITGSPTL (91 aa)) is a DNA-binding region (fork-head). Disordered stretches follow at residues 647 to 666 (LDHI…QPHI) and 676 to 713 (VIAE…EDLE). The segment covering 697–713 (LEDDREIEEEPLSEDLE) has biased composition (acidic residues).

In terms of assembly, forms homodimers and heterodimers with FOXP1 and FOXP4. Dimerization is required for DNA-binding. Interacts with CTBP1. Interacts with FOXP1. Interacts with TBR1. Interacts with ZMYM2.

The protein localises to the nucleus. In terms of biological role, transcriptional repressor that may play a role in the specification and differentiation of lung epithelium. May also play a role in developing neural, gastrointestinal and cardiovascular tissues. Can act with CTBP1 to synergistically repress transcription but CTPBP1 is not essential. Plays a role in synapse formation by regulating SRPX2 levels. This is Forkhead box protein P2 (FOXP2) from Hylobates lar (Lar gibbon).